The following is an 83-amino-acid chain: Small ribosomal subunit protein uS17 (83 aa).

It belongs to the universal ribosomal protein uS17 family. In terms of assembly, part of the 30S ribosomal subunit.

Functionally, one of the primary rRNA binding proteins, it binds specifically to the 5'-end of 16S ribosomal RNA. The protein is Small ribosomal subunit protein uS17 of Colwellia psychrerythraea (strain 34H / ATCC BAA-681) (Vibrio psychroerythus).